A 187-amino-acid chain; its full sequence is Protein GrpE (187 aa).

Residues 1-38 (MSEEKQTVEQNETEEQEIIEEQAAADEQQEETNESELL) form a disordered region. A compositionally biased stretch (acidic residues) spans 11–34 (NETEEQEIIEEQAAADEQQEETNE).

The protein belongs to the GrpE family. Homodimer.

It is found in the cytoplasm. Participates actively in the response to hyperosmotic and heat shock by preventing the aggregation of stress-denatured proteins, in association with DnaK and GrpE. It is the nucleotide exchange factor for DnaK and may function as a thermosensor. Unfolded proteins bind initially to DnaJ; upon interaction with the DnaJ-bound protein, DnaK hydrolyzes its bound ATP, resulting in the formation of a stable complex. GrpE releases ADP from DnaK; ATP binding to DnaK triggers the release of the substrate protein, thus completing the reaction cycle. Several rounds of ATP-dependent interactions between DnaJ, DnaK and GrpE are required for fully efficient folding. This is Protein GrpE from Bacillus subtilis (strain 168).